The primary structure comprises 80 residues: MSTVVVDAVEHVVRGIVDNPDDVRVDLVISRRGRTVEVHVHPDDLGKVIGRGGRTATALRKLVAGIGGRGIRVDVVDTDQ.

In terms of domain architecture, KH spans 33-80 (GRTVEVHVHPDDLGKVIGRGGRTATALRKLVAGIGGRGIRVDVVDTDQ).

This sequence belongs to the KhpA RNA-binding protein family.

It localises to the cytoplasm. Functionally, a probable RNA-binding protein. The polypeptide is RNA-binding protein KhpA (Mycobacterium leprae (strain TN)).